A 1263-amino-acid chain; its full sequence is Multidrug resistance protein sirA (1263 aa).

Positions 1-21 (MAEPESEKPSSAQGGGLPSSD) are disordered. 4 helical membrane-spanning segments follow: residues 57–77 (LISA…ILFI), 104–124 (IALY…IFTN), 179–199 (KIGL…IGFV), and 206–226 (FILT…SGFM). Positions 57 to 347 (LISAFFAAVS…VGPHLQAMSL (291 aa)) constitute an ABC transmembrane type-1 1 domain. N-linked (GlcNAc...) asparagine glycosylation is present at Asn232. The next 2 helical transmembrane spans lie at 284-304 (VMGW…GLAI) and 318-338 (VGAI…FGNV). In terms of domain architecture, ABC transporter 1 spans 380–625 (IEFRNVSHVY…EGLYQTFVRR (246 aa)). N-linked (GlcNAc...) asparagine glycosylation is present at Asn384. Residue 415 to 422 (GASGSGKS) coordinates ATP. Residue Asn469 is glycosylated (N-linked (GlcNAc...) asparagine). The segment at 635-672 (PPHARITPAVDTPASPQHRLSEKTGSIYGQGESEAADK) is disordered. 6 helical membrane passes run 699-719 (VTGI…SVFF), 740-760 (FWAA…GVQG), 817-839 (VFLG…SLAV), 843-865 (LTLV…LKLV), 930-950 (LSEA…ATLV), and 960-980 (FFIV…VFAF). An ABC transmembrane type-1 2 domain is found at 699-986 (VTGIASAVIS…VFAFAPDFGK (288 aa)). The 239-residue stretch at 1021-1259 (VDVSNVVFYY…RGSYYDSVNL (239 aa)) folds into the ABC transporter 2 domain. Residue 1056–1063 (GGSGSGKS) coordinates ATP.

The protein belongs to the ABC transporter superfamily. ABCB family. Multidrug resistance exporter (TC 3.A.1.201) subfamily.

The protein resides in the cell membrane. The catalysed reaction is ATP + H2O + xenobioticSide 1 = ADP + phosphate + xenobioticSide 2.. In terms of biological role, sirodesmin transporter that provides the dual role of sirodesmin export and self-protection. Also provides tolerance to gliotoxin. The polypeptide is Multidrug resistance protein sirA (Leptosphaeria maculans (Blackleg fungus)).